The following is a 197-amino-acid chain: Imidazoleglycerol-phosphate dehydratase (197 aa).

It belongs to the imidazoleglycerol-phosphate dehydratase family.

It localises to the cytoplasm. It carries out the reaction D-erythro-1-(imidazol-4-yl)glycerol 3-phosphate = 3-(imidazol-4-yl)-2-oxopropyl phosphate + H2O. It participates in amino-acid biosynthesis; L-histidine biosynthesis; L-histidine from 5-phospho-alpha-D-ribose 1-diphosphate: step 6/9. This chain is Imidazoleglycerol-phosphate dehydratase, found in Pseudomonas fluorescens (strain Pf0-1).